A 280-amino-acid chain; its full sequence is Energy-coupling factor transporter ATP-binding protein EcfA1 (280 aa).

Positions 6–241 (LRTENISFQY…SHMLQEIGLD (236 aa)) constitute an ABC transporter domain. 40–47 (GQNGSGKS) contributes to the ATP binding site.

Belongs to the ABC transporter superfamily. Energy-coupling factor EcfA family. As to quaternary structure, forms a stable energy-coupling factor (ECF) transporter complex composed of 2 membrane-embedded substrate-binding proteins (S component), 2 ATP-binding proteins (A component) and 2 transmembrane proteins (T component).

The protein localises to the cell membrane. Functionally, ATP-binding (A) component of a common energy-coupling factor (ECF) ABC-transporter complex. Unlike classic ABC transporters this ECF transporter provides the energy necessary to transport a number of different substrates. The chain is Energy-coupling factor transporter ATP-binding protein EcfA1 from Bacillus cereus (strain ATCC 10987 / NRS 248).